A 160-amino-acid polypeptide reads, in one-letter code: Nucleotide-binding protein VF_1240 (160 aa).

The protein belongs to the YajQ family.

Functionally, nucleotide-binding protein. This chain is Nucleotide-binding protein VF_1240, found in Aliivibrio fischeri (strain ATCC 700601 / ES114) (Vibrio fischeri).